The following is a 140-amino-acid chain: GTP-dependent dephospho-CoA kinase (140 aa).

Aspartate 21, valine 22, valine 23, aspartate 40, lysine 42, and glutamate 92 together coordinate GTP.

It belongs to the GTP-dependent DPCK family.

The enzyme catalyses 3'-dephospho-CoA + GTP = GDP + CoA + H(+). It functions in the pathway cofactor biosynthesis; coenzyme A biosynthesis. Its function is as follows. Catalyzes the GTP-dependent phosphorylation of the 3'-hydroxyl group of dephosphocoenzyme A to form coenzyme A (CoA). This chain is GTP-dependent dephospho-CoA kinase, found in Pyrobaculum aerophilum (strain ATCC 51768 / DSM 7523 / JCM 9630 / CIP 104966 / NBRC 100827 / IM2).